The following is a 257-amino-acid chain: UPF0246 protein BT_3869 (257 aa).

The protein belongs to the UPF0246 family.

This Bacteroides thetaiotaomicron (strain ATCC 29148 / DSM 2079 / JCM 5827 / CCUG 10774 / NCTC 10582 / VPI-5482 / E50) protein is UPF0246 protein BT_3869.